Consider the following 519-residue polypeptide: Ion-translocating oxidoreductase complex subunit C (519 aa).

4Fe-4S ferredoxin-type domains lie at 372–401 and 411–440; these read ETPEAKTMPCIRCGRCVQGCPVGLTPFELN and GAAKVGLMDCLACGCCSYNCPANLPLVQSF. The [4Fe-4S] cluster site is built by cysteine 381, cysteine 384, cysteine 387, cysteine 391, cysteine 420, cysteine 423, cysteine 426, and cysteine 430. The disordered stretch occupies residues 494–519; the sequence is KAEEAAAAAAMPPPATATAIQGEATP.

It belongs to the 4Fe4S bacterial-type ferredoxin family. RnfC subfamily. In terms of assembly, the complex is composed of six subunits: RnfA, RnfB, RnfC, RnfD, RnfE and RnfG. [4Fe-4S] cluster is required as a cofactor.

The protein resides in the cellular chromatophore membrane. Its function is as follows. Part of a membrane-bound complex that couples electron transfer with translocation of ions across the membrane. Required for nitrogen fixation. Involved in electron transfer to nitrogenase. The sequence is that of Ion-translocating oxidoreductase complex subunit C from Rhodobacter capsulatus (Rhodopseudomonas capsulata).